The sequence spans 160 residues: Serine-protein kinase RsbW (160 aa).

It belongs to the anti-sigma-factor family.

It carries out the reaction L-seryl-[protein] + ATP = O-phospho-L-seryl-[protein] + ADP + H(+). The enzyme catalyses L-threonyl-[protein] + ATP = O-phospho-L-threonyl-[protein] + ADP + H(+). Functionally, negative regulator of sigma-B activity. Phosphorylates and inactivates its specific antagonist protein, RsbV. Upon phosphorylation of RsbV, RsbW is released and binds to sigma-B, thereby blocking its ability to form an RNA polymerase holoenzyme (E-sigma-B). This chain is Serine-protein kinase RsbW, found in Bacillus mycoides (strain KBAB4) (Bacillus weihenstephanensis).